Reading from the N-terminus, the 283-residue chain is 4-diphosphocytidyl-2-C-methyl-D-erythritol kinase (283 aa).

The active site involves K10. 99 to 109 (PMGGGLGGGSS) serves as a coordination point for ATP. D141 is an active-site residue.

The protein belongs to the GHMP kinase family. IspE subfamily. Homodimer.

The catalysed reaction is 4-CDP-2-C-methyl-D-erythritol + ATP = 4-CDP-2-C-methyl-D-erythritol 2-phosphate + ADP + H(+). The protein operates within isoprenoid biosynthesis; isopentenyl diphosphate biosynthesis via DXP pathway; isopentenyl diphosphate from 1-deoxy-D-xylulose 5-phosphate: step 3/6. Its function is as follows. Catalyzes the phosphorylation of the position 2 hydroxy group of 4-diphosphocytidyl-2C-methyl-D-erythritol. The sequence is that of 4-diphosphocytidyl-2-C-methyl-D-erythritol kinase from Escherichia coli O9:H4 (strain HS).